Here is a 376-residue protein sequence, read N- to C-terminus: Phospho-N-acetylmuramoyl-pentapeptide-transferase (376 aa).

Transmembrane regions (helical) follow at residues 28–48 (RTIMATITAMVLTFVLAPWFI), 76–96 (TMGGALILLSLLLPTVLWADL), 100–120 (FVLATTAVTAGYGVIGYLDDF), 135–155 (YKLIGQVLIGGAAVAYTFLLA), 179–199 (YPIELPLYVYIPFAVFVVVAT), 211–231 (GLAIGPVIINAGTYLILAYIV), 252–272 (AGELSVYCGSVIGAGIGFLWY), 279–299 (VFMGDVGSLALGGGLGMLAVF), 307–327 (IILGGIFFIETVSVITQVLSF), and 353–373 (KIIVRFWIISILLALVSLASM).

This sequence belongs to the glycosyltransferase 4 family. MraY subfamily. Mg(2+) serves as cofactor.

It is found in the cell inner membrane. The enzyme catalyses UDP-N-acetyl-alpha-D-muramoyl-L-alanyl-gamma-D-glutamyl-meso-2,6-diaminopimeloyl-D-alanyl-D-alanine + di-trans,octa-cis-undecaprenyl phosphate = di-trans,octa-cis-undecaprenyl diphospho-N-acetyl-alpha-D-muramoyl-L-alanyl-D-glutamyl-meso-2,6-diaminopimeloyl-D-alanyl-D-alanine + UMP. It functions in the pathway cell wall biogenesis; peptidoglycan biosynthesis. Functionally, catalyzes the initial step of the lipid cycle reactions in the biosynthesis of the cell wall peptidoglycan: transfers peptidoglycan precursor phospho-MurNAc-pentapeptide from UDP-MurNAc-pentapeptide onto the lipid carrier undecaprenyl phosphate, yielding undecaprenyl-pyrophosphoryl-MurNAc-pentapeptide, known as lipid I. The protein is Phospho-N-acetylmuramoyl-pentapeptide-transferase of Sorangium cellulosum (strain So ce56) (Polyangium cellulosum (strain So ce56)).